A 380-amino-acid chain; its full sequence is Cytochrome b (380 aa).

Transmembrane regions (helical) follow at residues Phe34–Met54, Trp78–Ile99, Trp114–Leu134, and Phe179–Val199. 2 residues coordinate heme b: His84 and His98. Residue His183 participates in heme b binding. Residue His202 coordinates a ubiquinone. The next 4 helical transmembrane spans lie at Thr227 to Phe247, Leu289 to Asn309, Leu321 to Ser341, and Phe348 to Leu369.

It belongs to the cytochrome b family. In terms of assembly, the main subunits of complex b-c1 are: cytochrome b, cytochrome c1 and the Rieske protein. The cofactor is heme b.

It localises to the mitochondrion inner membrane. Component of the ubiquinol-cytochrome c reductase complex (complex III or cytochrome b-c1 complex) that is part of the mitochondrial respiratory chain. The b-c1 complex mediates electron transfer from ubiquinol to cytochrome c. Contributes to the generation of a proton gradient across the mitochondrial membrane that is then used for ATP synthesis. The protein is Cytochrome b (MT-CYB) of Paracentrotus lividus (Common sea urchin).